Reading from the N-terminus, the 207-residue chain is Holliday junction branch migration complex subunit RuvA (207 aa).

The interval Met1–Leu63 is domain I. Residues Asp64–Thr142 are domain II. A flexible linker region spans residues Ser143–Val153. A domain III region spans residues Val153–Arg207.

The protein belongs to the RuvA family. As to quaternary structure, homotetramer. Forms an RuvA(8)-RuvB(12)-Holliday junction (HJ) complex. HJ DNA is sandwiched between 2 RuvA tetramers; dsDNA enters through RuvA and exits via RuvB. An RuvB hexamer assembles on each DNA strand where it exits the tetramer. Each RuvB hexamer is contacted by two RuvA subunits (via domain III) on 2 adjacent RuvB subunits; this complex drives branch migration. In the full resolvosome a probable DNA-RuvA(4)-RuvB(12)-RuvC(2) complex forms which resolves the HJ.

Its subcellular location is the cytoplasm. Its function is as follows. The RuvA-RuvB-RuvC complex processes Holliday junction (HJ) DNA during genetic recombination and DNA repair, while the RuvA-RuvB complex plays an important role in the rescue of blocked DNA replication forks via replication fork reversal (RFR). RuvA specifically binds to HJ cruciform DNA, conferring on it an open structure. The RuvB hexamer acts as an ATP-dependent pump, pulling dsDNA into and through the RuvAB complex. HJ branch migration allows RuvC to scan DNA until it finds its consensus sequence, where it cleaves and resolves the cruciform DNA. This is Holliday junction branch migration complex subunit RuvA from Bifidobacterium animalis subsp. lactis (strain AD011).